We begin with the raw amino-acid sequence, 314 residues long: Mycothiol acetyltransferase (314 aa).

N-acetyltransferase domains are found at residues 18 to 156 (ATIR…RPLA) and 168 to 314 (IRIA…MYQL). Glu-38 provides a ligand contact to 1D-myo-inositol 2-(L-cysteinylamino)-2-deoxy-alpha-D-glucopyranoside. 92 to 94 (VVV) contributes to the acetyl-CoA binding site. 3 residues coordinate 1D-myo-inositol 2-(L-cysteinylamino)-2-deoxy-alpha-D-glucopyranoside: Glu-195, Lys-234, and Glu-248. Residues 252–254 (VGL) and 259–265 (QGHGLGR) contribute to the acetyl-CoA site. A 1D-myo-inositol 2-(L-cysteinylamino)-2-deoxy-alpha-D-glucopyranoside-binding site is contributed by Tyr-286.

This sequence belongs to the acetyltransferase family. MshD subfamily. As to quaternary structure, monomer.

The catalysed reaction is 1D-myo-inositol 2-(L-cysteinylamino)-2-deoxy-alpha-D-glucopyranoside + acetyl-CoA = mycothiol + CoA + H(+). Functionally, catalyzes the transfer of acetyl from acetyl-CoA to desacetylmycothiol (Cys-GlcN-Ins) to form mycothiol. In Catenulispora acidiphila (strain DSM 44928 / JCM 14897 / NBRC 102108 / NRRL B-24433 / ID139908), this protein is Mycothiol acetyltransferase.